The primary structure comprises 253 residues: MADWNPSLYLQFDAERTRPAADLLSRIAHLQVEHVVDLGCGPGNSTRLLRAAWPLAAITGIDNSPAMLAQAAQALPDCEFIDADIARWRPAQPVDVIYANASLQWLADHETLFPHLVAQLAVNGTLAVQMPDNWQEPSHTLMRQVADEQGLPDRGRQPLLPPDAWYDMLTRQGCEVDIWRTTYFHPLASHQAISDWLQGTGLRPYLAGLDEQSRNAFLTRYVELLAEHYPLQCNGKVLLRFPRLFIVARKIDV.

It belongs to the methyltransferase superfamily. Tam family.

It is found in the cytoplasm. The catalysed reaction is trans-aconitate + S-adenosyl-L-methionine = (E)-3-(methoxycarbonyl)pent-2-enedioate + S-adenosyl-L-homocysteine. Its function is as follows. Catalyzes the S-adenosylmethionine monomethyl esterification of trans-aconitate. This is Trans-aconitate 2-methyltransferase from Klebsiella pneumoniae (strain 342).